We begin with the raw amino-acid sequence, 327 residues long: ABC transporter periplasmic-binding protein YphF (327 aa).

The first 26 residues, 1–26 (MPTKMRTTRNLLLMATLLGSALFARA), serve as a signal peptide directing secretion.

The protein belongs to the bacterial solute-binding protein 2 family.

The protein resides in the periplasm. In terms of biological role, probably part of the binding-protein-dependent transport system YphDEF. This Escherichia coli (strain K12) protein is ABC transporter periplasmic-binding protein YphF (yphF).